A 277-amino-acid polypeptide reads, in one-letter code: Large ribosomal subunit protein uL2 (277 aa).

Disordered stretches follow at residues 1 to 58 (MGIR…GGGH) and 223 to 277 (GVVM…GKKR). Basic and acidic residues predominate over residues 23-33 (EITRSEPEKSL). The segment covering 37–58 (LHGRGGRNAHGKITTRHKGGGH) has biased composition (basic residues). The span at 251–267 (GKPEGRTRRNKPSDKLI) shows a compositional bias: basic and acidic residues. Positions 268 to 277 (VRRRRTGKKR) are enriched in basic residues.

The protein belongs to the universal ribosomal protein uL2 family. As to quaternary structure, part of the 50S ribosomal subunit. Forms a bridge to the 30S subunit in the 70S ribosome.

Its function is as follows. One of the primary rRNA binding proteins. Required for association of the 30S and 50S subunits to form the 70S ribosome, for tRNA binding and peptide bond formation. It has been suggested to have peptidyltransferase activity; this is somewhat controversial. Makes several contacts with the 16S rRNA in the 70S ribosome. The polypeptide is Large ribosomal subunit protein uL2 (Saccharopolyspora erythraea (strain ATCC 11635 / DSM 40517 / JCM 4748 / NBRC 13426 / NCIMB 8594 / NRRL 2338)).